The primary structure comprises 529 residues: MTSTVTQQAANALPPVARTYQVRTYGCQMNVHDSERLAGLLEDAGYRRAADGADADVVVFNTCAVRENADNKLYGNLSHLAPRKRSEPQMQIAVGGCLAQKDRDAVLRRAPWVDVVFGTHNIGSLPTLLERARHNRAAQVEIAEALQEFPSTLPAARESAYAGWVSISVGCNNTCTFCIVPSLRGKEVDRRPGDVLAEIQTLVDQGVLEVTLLGQNVNAYGVSFAADERLREDPRMWQSVPRNRGAFAELLRACGRIDGLERVRFTSPHPAEFTDDVIEAMAETPNVCPALHMPLQSGSDRILRAMRRSYRAEKYLGIIDRVRAAIPDAAITTDLIVGFPGETEEDFQATLDVVAASRFSSAFTFQYSKRPGTPAADMPGQLPKAVVSERYQRLIELQERISLEENQAQVGRTLELLVATGEGRKDAATARLSGRARDGRLVHFAPGAAADEPLARRAFDQVRPGDVVTTTVTGAAPHHLIADGALLTHRRTRAGDAHAAGLRPRTGVGLGIPGVGAPAPAPVTTGCAL.

One can recognise an MTTase N-terminal domain in the interval 18–134 (RTYQVRTYGC…LPTLLERARH (117 aa)). Residues cysteine 27, cysteine 63, cysteine 97, cysteine 171, cysteine 175, and cysteine 178 each contribute to the [4Fe-4S] cluster site. The region spanning 157–404 (RESAYAGWVS…IELQERISLE (248 aa)) is the Radical SAM core domain. In terms of domain architecture, TRAM spans 407 to 486 (QAQVGRTLEL…PHHLIADGAL (80 aa)).

It belongs to the methylthiotransferase family. MiaB subfamily. Monomer. [4Fe-4S] cluster is required as a cofactor.

It localises to the cytoplasm. It catalyses the reaction N(6)-dimethylallyladenosine(37) in tRNA + (sulfur carrier)-SH + AH2 + 2 S-adenosyl-L-methionine = 2-methylsulfanyl-N(6)-dimethylallyladenosine(37) in tRNA + (sulfur carrier)-H + 5'-deoxyadenosine + L-methionine + A + S-adenosyl-L-homocysteine + 2 H(+). Catalyzes the methylthiolation of N6-(dimethylallyl)adenosine (i(6)A), leading to the formation of 2-methylthio-N6-(dimethylallyl)adenosine (ms(2)i(6)A) at position 37 in tRNAs that read codons beginning with uridine. In Mycobacterium sp. (strain KMS), this protein is tRNA-2-methylthio-N(6)-dimethylallyladenosine synthase.